The chain runs to 292 residues: Putative phosphatase MPN_381 (292 aa).

The Nucleophile role is filled by Asp11. Position 11 (Asp11) interacts with Mg(2+). Leu12 is a phosphate binding site. Asp13 provides a ligand contact to Mg(2+). Phosphate contacts are provided by residues 60-61 and Lys217; that span reads TG. Asp242 contacts Mg(2+). Position 245 (Asn245) interacts with phosphate.

The protein belongs to the HAD-like hydrolase superfamily. Cof family. It depends on Mg(2+) as a cofactor.

This chain is Putative phosphatase MPN_381, found in Mycoplasma pneumoniae (strain ATCC 29342 / M129 / Subtype 1) (Mycoplasmoides pneumoniae).